A 130-amino-acid polypeptide reads, in one-letter code: Small ribosomal subunit protein uS11c (130 aa).

This sequence belongs to the universal ribosomal protein uS11 family. Part of the 30S ribosomal subunit.

It is found in the plastid. Its subcellular location is the chloroplast. The chain is Small ribosomal subunit protein uS11c from Cycas taitungensis (Prince sago).